A 332-amino-acid chain; its full sequence is Homeobox protein SIX3 (332 aa).

The segment at 72 to 119 (APPEELSMFQLPTLNFSPEQVASVCETLEETGDIERLGRFLWSLPVAP) is interaction with TLE5. A DNA-binding region (homeobox) is located at residues 206 to 265 (GEQKTHCFKERTRSLLREWYLQDPYPNPSKKRELAQATGLTPTQVGNWFKNRRQRDRAAA). The bind to RHO promoter stretch occupies residues 232–234 (NPS). 2 disordered regions span residues 232-251 (NPSK…TQVG) and 258-332 (RQRD…ECDV). The span at 293–309 (SAESPSTAASPTTSVSS) shows a compositional bias: low complexity. Polar residues predominate over residues 316–332 (TGTSILSVTSSDSECDV).

The protein belongs to the SIX/Sine oculis homeobox family. As to quaternary structure, interacts with EYA4; translocates EYA4 from the cytoplasm to the nucleus and promotes activation of their target genes. Interacts with MTA1 and HDAC2; represses its own transcription. Interacts with MTA1; facilitates the binding of SIX3 to the core DNA motif of SIX3 promoter. Interacts with EYA1; promotes EYA1 translocation to the nucleus. Interacts with TLE1 and TLE5 (via Q domain); can act in combination with either TLE1 and/or TLE5 leading to transcriptional repression or activation, respectively. Interacts (via homeobox) with NR4A3; differentially regulates the transcriptional activities NR4A3. Interacts with GMNN. Interacts with TLE4.

Its subcellular location is the nucleus. Functionally, transcriptional regulator which can act as both a transcriptional repressor and activator by binding a ATTA homeodomain core recognition sequence on these target genes. During forebrain development represses WNT1 expression allowing zona limitans intrathalamica formation and thereby ensuring proper anterio-posterior patterning of the diencephalon and formation of the rostral diencephalon. Acts as a direct upstream activator of SHH expression in the rostral diencephalon ventral midline and that in turn SHH maintains its expression. In addition, Six3 activity is required for the formation of the telencephalon. During postnatal stages of brain development is necessary for ependymal cell maturation by promoting the maturation of radial glia into ependymal cells through regulation of neuroblast proliferation and migration. Acts on the proliferation and differentiation of neural progenitor cells through activating transcription of CCND1 and CCND2. During early lens formation plays a role in lens induction and specification by activating directly PAX6 in the presumptive lens ectoderm. In turn PAX6 activates SIX3 resulting in activation of PDGFRA and CCND1 promoting cell proliferation. Also is required for the neuroretina development by directly suppressing WNT8B expression in the anterior neural plate territory. Its action during retina development and lens morphogenesis is TLE5 and TLE4-dependent manner. Furthermore, during eye development regulates several genes expression. Before and during early lens development represses the CRYGF promoter by binding a SIX repressor element. Directly activates RHO transcription, or cooperates with CRX or NRL. Six3 also functions in the formation of the proximodistal axis of the optic cup, and promotes the formation of optic vesicles-like structures. During pituitary development, acts in parallel or alternatively with HESX1 to control cell proliferation through Wnt/beta-catenin pathway. Plays a role in eye development by suppressing WNT1 expression and in dorsal-ventral patterning by repressing BMP signaling pathway. This is Homeobox protein SIX3 (SIX3) from Homo sapiens (Human).